The following is a 422-amino-acid chain: 2,3-bisphosphoglycerate-independent phosphoglycerate mutase (422 aa).

A disordered region spans residues 173–194 (DADPKRVGKPVKDVKPTSDDPA). Residues 174–190 (ADPKRVGKPVKDVKPTS) are compositionally biased toward basic and acidic residues.

It belongs to the BPG-independent phosphoglycerate mutase family. A-PGAM subfamily.

The catalysed reaction is (2R)-2-phosphoglycerate = (2R)-3-phosphoglycerate. It participates in carbohydrate degradation; glycolysis; pyruvate from D-glyceraldehyde 3-phosphate: step 3/5. In terms of biological role, catalyzes the interconversion of 2-phosphoglycerate and 3-phosphoglycerate. The polypeptide is 2,3-bisphosphoglycerate-independent phosphoglycerate mutase (Methanopyrus kandleri (strain AV19 / DSM 6324 / JCM 9639 / NBRC 100938)).